A 498-amino-acid polypeptide reads, in one-letter code: Diacylglycerol O-acyltransferase 1A (498 aa).

Positions 1-67 (MAISDEPETV…ANSQPQQKQD (67 aa)) are disordered. Helical transmembrane passes span 102–122 (HAGLFNLCIVVLVAVNSRLII), 146–166 (WPLFMCCLSLVVFPFAAFIVE), 178–198 (VVVVLHIIITSASLFYPVLVI), 203–223 (SAFLSGVTLMLFACVVWLKLV), 253–273 (YPYNVSFKSLAYFLVAPTLCY), 295–315 (LIIFTGVMGFIIEQYINPIVQ), and 342–362 (VWLCMFYCFFHLWLNILAELL). Positions 369–375 (FYQDWWN) match the FYXDWWN motif motif. The next 3 membrane-spanning stretches (helical) occupy residues 410 to 430 (AVALLIAFLVSALFHELCIAV), 432 to 452 (CHIFKLWAFGGIMFQVPLVFI), and 465 to 485 (VGNMIFWFIFSILGQPMCVLL). Residue His-424 is part of the active site.

This sequence belongs to the membrane-bound acyltransferase family. Sterol o-acyltransferase subfamily. As to expression, highly expressed in flowers and pods. Expressed at low levels in roots, stems and leaves.

The protein resides in the endoplasmic reticulum membrane. The enzyme catalyses an acyl-CoA + a 1,2-diacyl-sn-glycerol = a triacyl-sn-glycerol + CoA. It functions in the pathway glycerolipid metabolism; triacylglycerol biosynthesis. Major contributor to triacylglycerol (TAG) synthesis and oil accumulation in developing seeds. Catalyzes the acylation of the sn-3 hydroxy group of sn-1,2-diacylglycerol using acyl-CoA. Has a marked preference for oleoyl-CoA (18:1) and sn-1,2-dioleoylglycerol over vernoloyl-CoA and sn-1,2-divernoloylglycerol. Can use oleoyl-CoA, linoleoyl-CoA and linolenoyl-CoA as substrates. The sequence is that of Diacylglycerol O-acyltransferase 1A from Glycine max (Soybean).